Consider the following 378-residue polypeptide: MISQINNEERDYKLEAYDYFLDPSLIASKPSAIRHESRLMIVRNSVLEEDCLTNKFTKNLLDEFREGDLVVVNNTKVMKARLKVELENRTLVELLVLERSDECVWLCLAKPAKKLKINRKLKLKSPSEQDINLMVDGVDEETGGRFIKFPENITDLNSMNNLLDKYGEIPLPPYIKNSEEESFHENSYQTEYAINPGAVAAPTAGLHLSKSLISNLKKKGVIILPITLHVGYGTFKPIDQEDLTNLKLHKEWVSVNKEVVEEIKRIKKTDRRIIAIGTTSVRALESCYSHEINDFIPIAKYVDLVIKPGYKFRVVDGLLTNFHLPKSSLLLLVSAMIGRERLLDLYKKAIKEKFRFFSYGDAMYISPDSLLEKNRFKL.

It belongs to the QueA family. In terms of assembly, monomer.

It is found in the cytoplasm. It catalyses the reaction 7-aminomethyl-7-carbaguanosine(34) in tRNA + S-adenosyl-L-methionine = epoxyqueuosine(34) in tRNA + adenine + L-methionine + 2 H(+). Its pathway is tRNA modification; tRNA-queuosine biosynthesis. In terms of biological role, transfers and isomerizes the ribose moiety from AdoMet to the 7-aminomethyl group of 7-deazaguanine (preQ1-tRNA) to give epoxyqueuosine (oQ-tRNA). The polypeptide is S-adenosylmethionine:tRNA ribosyltransferase-isomerase (Prochlorococcus marinus (strain MIT 9312)).